Consider the following 132-residue polypeptide: Small ribosomal subunit protein uS8 (132 aa).

This sequence belongs to the universal ribosomal protein uS8 family. Part of the 30S ribosomal subunit. Contacts proteins S5 and S12.

In terms of biological role, one of the primary rRNA binding proteins, it binds directly to 16S rRNA central domain where it helps coordinate assembly of the platform of the 30S subunit. This chain is Small ribosomal subunit protein uS8, found in Rhodospirillum rubrum (strain ATCC 11170 / ATH 1.1.1 / DSM 467 / LMG 4362 / NCIMB 8255 / S1).